The sequence spans 866 residues: Replication factor C small subunit (866 aa).

In terms of domain architecture, DOD-type homing endonuclease spans 183–313; sequence WLGYFIGDGH…VTYALAGFGI (131 aa).

It belongs to the activator 1 small subunits family. RfcS subfamily. Heteromultimer composed of small subunits (RfcS) and large subunits (RfcL). In terms of processing, this protein undergoes a protein self splicing that involves a post-translational excision of the intervening region (intein) followed by peptide ligation.

Functionally, part of the RFC clamp loader complex which loads the PCNA sliding clamp onto DNA. In Thermococcus kodakarensis (strain ATCC BAA-918 / JCM 12380 / KOD1) (Pyrococcus kodakaraensis (strain KOD1)), this protein is Replication factor C small subunit (rfcS).